The following is a 201-amino-acid chain: Thioredoxin reductase-like selenoprotein T (201 aa).

An N-terminal signal peptide occupies residues 1–26 (MARSSGPLCLLLLGGLVAGILSGASA). A cross-link (cysteinyl-selenocysteine (Cys-Sec)) is located at residues 51 to 54 (CVSU). Position 54 (selenocysteine 54) is a non-standard amino acid, selenocysteine. A helical membrane pass occupies residues 96-116 (VFKLVLIGLIIAGKDPFAFFG).

Belongs to the SelWTH family. Selenoprotein T subfamily. In terms of processing, may contain a selenide-sulfide bond between Cys-51 and Sec-54. This bond is speculated to serve as redox-active pair.

It localises to the endoplasmic reticulum membrane. The enzyme catalyses [thioredoxin]-dithiol + NADP(+) = [thioredoxin]-disulfide + NADPH + H(+). Selenoprotein with thioredoxin reductase-like oxidoreductase activity. In Xenopus tropicalis (Western clawed frog), this protein is Thioredoxin reductase-like selenoprotein T (selenot).